We begin with the raw amino-acid sequence, 358 residues long: tRNA-specific 2-thiouridylase MnmA (358 aa).

ATP-binding positions include Ala6–Ser13 and Met32. The active-site Nucleophile is Cys103. The cysteines at positions 103 and 201 are disulfide-linked. Residue Gly127 participates in ATP binding. Residues Lys151–Gln153 form an interaction with tRNA region. The Cysteine persulfide intermediate role is filled by Cys201.

It belongs to the MnmA/TRMU family.

It is found in the cytoplasm. It catalyses the reaction S-sulfanyl-L-cysteinyl-[protein] + uridine(34) in tRNA + AH2 + ATP = 2-thiouridine(34) in tRNA + L-cysteinyl-[protein] + A + AMP + diphosphate + H(+). Its function is as follows. Catalyzes the 2-thiolation of uridine at the wobble position (U34) of tRNA, leading to the formation of s(2)U34. In Thermotoga neapolitana (strain ATCC 49049 / DSM 4359 / NBRC 107923 / NS-E), this protein is tRNA-specific 2-thiouridylase MnmA.